Consider the following 413-residue polypeptide: MQYKKTLVASALAATTLAAYAPSEPWSTLTPTATYSGGVTDYASTFGIAVQPISTTSSASSAATTASSKAKRAASQIGDGQVQAATTTASVSTKSTAAAVSQIGDGQIQATTKTTAAAVSQIGDGQIQATTKTTSAKTTAAAVSQISDGQIQATTTTLAPKSTAAAVSQIGDGQVQATTTTLAPKSTAAAVSQIGDGQVQATTKTTAAAVSQIGDGQVQATTKTTAAAVSQIGDGQVQATTKTTAAAVSQIGDGQVQATTKTTAAAVSQITDGQVQATTKTTQAASQVSDGQVQATTATSASAAATSTDPVDAVSCKTSGTLEMNLKGGILTDGKGRIGSIVANRQFQFDGPPPQAGAIYAAGWSITPDGNLAIGDNDVFYQCLSGTFYNLYDEHIGSQCTPVHLEAIDLIDC.

An N-terminal signal peptide occupies residues 1 to 18 (MQYKKTLVASALAATTLA). Positions 19–72 (AYAPSEPWSTLTPTATYSGGVTDYASTFGIAVQPISTTSSASSAATTASSKAKR) are excised as a propeptide. PIR1/2/3 repeat units lie at residues 73 to 89 (AASQIGDGQVQAATTTA), 97 to 115 (AAAVSQIGDGQIQATTKTT), 116 to 134 (AAAVSQIGDGQIQATTKTT), 140 to 158 (AAAVSQISDGQIQATTTTL), 164 to 182 (AAAVSQIGDGQVQATTTTL), 188 to 206 (AAAVSQIGDGQVQATTKTT), 207 to 225 (AAAVSQIGDGQVQATTKTT), 226 to 244 (AAAVSQIGDGQVQATTKTT), 245 to 263 (AAAVSQIGDGQVQATTKTT), 264 to 282 (AAAVSQITDGQVQATTKTT), and 283 to 300 (QAASQVSDGQVQATTATS).

It belongs to the PIR protein family. Covalently linked to beta-1,3-glucan of the inner cell wall layer via an alkali-sensitive ester linkage between the gamma-carboxyl group of glutamic acids, arising from specific glutamines within the PIR1/2/3 repeats, and hydroxyl groups of glucoses of beta-1,3-glucan chains. In terms of processing, the propeptide is cleaved off in the late Golgi. While both peptides are secreted, only a fraction of the mature glycoprotein is incorporated into the cell wall. Post-translationally, O-glycosylated. Extensively O-mannosylated.

Its subcellular location is the secreted. It localises to the cell wall. In terms of biological role, component of the outer cell wall layer. Required for stability of the cell wall and for optimal growth. Required for resistance against several antifungal and cell wall-perturbing agents and for tolerance to heat shock. This is Cell wall mannoprotein HSP150 (HSP150) from Saccharomyces cerevisiae (strain ATCC 204508 / S288c) (Baker's yeast).